The primary structure comprises 110 residues: UPF0060 membrane protein Haur_1798 (110 aa).

The next 4 membrane-spanning stretches (helical) occupy residues 7–27 (VVLF…VWQW), 33–53 (SIWF…LPTL), 63–83 (VYAA…WLID), and 89–109 (QPSL…LYWP).

Belongs to the UPF0060 family.

The protein localises to the cell membrane. This Herpetosiphon aurantiacus (strain ATCC 23779 / DSM 785 / 114-95) protein is UPF0060 membrane protein Haur_1798.